Reading from the N-terminus, the 337-residue chain is Phosphate acyltransferase (337 aa).

It belongs to the PlsX family. Homodimer. Probably interacts with PlsY.

It localises to the cytoplasm. The catalysed reaction is a fatty acyl-[ACP] + phosphate = an acyl phosphate + holo-[ACP]. The protein operates within lipid metabolism; phospholipid metabolism. In terms of biological role, catalyzes the reversible formation of acyl-phosphate (acyl-PO(4)) from acyl-[acyl-carrier-protein] (acyl-ACP). This enzyme utilizes acyl-ACP as fatty acyl donor, but not acyl-CoA. The sequence is that of Phosphate acyltransferase from Acidobacterium capsulatum (strain ATCC 51196 / DSM 11244 / BCRC 80197 / JCM 7670 / NBRC 15755 / NCIMB 13165 / 161).